Consider the following 55-residue polypeptide: Large ribosomal subunit protein bL33 (55 aa).

The protein belongs to the bacterial ribosomal protein bL33 family.

This is Large ribosomal subunit protein bL33 from Yersinia pestis (strain Pestoides F).